Here is a 308-residue protein sequence, read N- to C-terminus: Atrochrysone carboxyl ACP thioesterase (308 aa).

4 residues coordinate Zn(2+): histidine 99, histidine 101, aspartate 103, and histidine 104. The Proton donor/acceptor role is filled by aspartate 103.

It belongs to the metallo-beta-lactamase superfamily. Zn(2+) is required as a cofactor.

The catalysed reaction is atrochrysone carboxyl-[ACP] + H2O = atrochrysone carboxylate + holo-[ACP] + H(+). The protein operates within secondary metabolite biosynthesis. Its function is as follows. Atrochrysone carboxyl ACP thioesterase; part of the gene cluster that mediates the biosynthesis of physcion, a natural anthraquinone fungicide that can prevent plant fungal infections. The pathway begins with the polyketide synthase AcPKS that condenses 8 malonyl-CoA units to synthesize atrochrysone thioester which is released from the synthase by the atrochrysone carboxyl ACP thioesterase AcTE that breaks the thioester bond and leads to free atrochrysone carboxylic acid. Spontaneous decarboxylation of atrochrysone carboxylic acid leads to the formation of atrochrysone. Then, atrochrysone undergoes spontaneous dehydration and oxidation, giving the products emodin anthrone and emodin. The O-methyltransferase AcOMT then methylates the C-6 hydroxyl of emodin to form physcion. The sequence is that of Atrochrysone carboxyl ACP thioesterase from Aspergillus chevalieri (Eurotium chevalieri).